We begin with the raw amino-acid sequence, 496 residues long: Glycerol kinase (496 aa).

T12 contributes to the ADP binding site. 3 residues coordinate ATP: T12, T13, and S14. A sn-glycerol 3-phosphate-binding site is contributed by T12. R16 is an ADP binding site. R82, E83, and Y134 together coordinate sn-glycerol 3-phosphate. Positions 82, 83, and 134 each coordinate glycerol. At H230 the chain carries Phosphohistidine; by HPr. A sn-glycerol 3-phosphate-binding site is contributed by D244. D244 and Q245 together coordinate glycerol. ADP-binding residues include T266 and G309. ATP is bound by residues T266, G309, Q313, and G410. ADP is bound by residues G410 and N414.

It belongs to the FGGY kinase family. As to quaternary structure, homotetramer and homodimer (in equilibrium). Post-translationally, the phosphoenolpyruvate-dependent sugar phosphotransferase system (PTS), including enzyme I, and histidine-containing protein (HPr) are required for the phosphorylation, which leads to the activation of the enzyme.

The enzyme catalyses glycerol + ATP = sn-glycerol 3-phosphate + ADP + H(+). Its pathway is polyol metabolism; glycerol degradation via glycerol kinase pathway; sn-glycerol 3-phosphate from glycerol: step 1/1. With respect to regulation, activated by phosphorylation and inhibited by fructose 1,6-bisphosphate (FBP). Its function is as follows. Key enzyme in the regulation of glycerol uptake and metabolism. Catalyzes the phosphorylation of glycerol to yield sn-glycerol 3-phosphate. The sequence is that of Glycerol kinase from Bacillus thuringiensis (strain Al Hakam).